The chain runs to 125 residues: MKYTLIAAIVVLALAQGTLAVEQSPELEKMAQFFEGMKTELMATVQKVSESLQSQTIIEDGRTQLEPIMTQIQEHLAPLATSVQEKVTPLAEDMQQKLKPYVDEFQSELESVLRKLLDQAKAITQ.

The first 20 residues, 1-20, serve as a signal peptide directing secretion; that stretch reads MKYTLIAAIVVLALAQGTLA.

This sequence belongs to the apolipoprotein A1/A4/E family.

Its subcellular location is the secreted. Functionally, antifreeze proteins lower the blood freezing point. This is Type-4 ice-structuring protein from Gadus morhua (Atlantic cod).